A 3302-amino-acid chain; its full sequence is Xin actin-binding repeat-containing protein 2 (3302 aa).

Residues 166 to 204 (NDSEETLKPSSAMGTSSYTSARQSKETSTSSYSNHSLTS) form a disordered region. Residues 173–187 (KPSSAMGTSSYTSAR) show a composition bias toward polar residues. Over residues 191 to 204 (ETSTSSYSNHSLTS) the composition is skewed to low complexity. 7 Xin repeats span residues 306-321 (AGVQQARYVFENTNDS), 341-356 (GEVQSIRWIFENQPLD), 381-396 (GDVKYTTWMFETQPID), 418-433 (GDVCTARWMFETRPLD), 456-471 (GDVKTVRYMFETQQLD), 496-511 (GNVKRSIKCFETQPLY), and 534-549 (GDVRTARWMFETQPLD). Phosphoserine is present on serine 565. 2 Xin repeats span residues 572–587 (GEVGRARWLFETQPLE) and 606–621 (IDVSKKCWMFETQPLD). Serine 633 is subject to Phosphoserine. 5 Xin repeats span residues 640-655 (GDVKTTKHLLETLPIE), 677-692 (GDVKHQKWVFETQRLE), 713-728 (GHVKNYTHIFESNNLI), 744-759 (GTVELNKSLFETTPLY), and 782-797 (GDVRSCRWLFETRPID). Serine 813 bears the Phosphoserine mark. Xin repeat units lie at residues 820-835 (GNVKSARWLFETQPLD), 859-874 (GDVKTCKWLFETQPME), 892-907 (GDVRTCMWLFETQPLD), 930-945 (GDVRTACLLFETENLD), 965-980 (GDVSGMKYKFENQSLD), 1004-1019 (GNVLNCRWLFENQPID), 1040-1055 (GDVRKGCFIFETFSLD), 1077-1092 (GDVKSYKMLFETQPLY), 1115-1130 (GDVRGTRWLFETKPLD), 1152-1167 (GDVSSVRYRFETQPLD), and 1186-1201 (GNVQMNKQLFESEGGD). Serine 1210 bears the Phosphoserine mark. Xin repeat units follow at residues 1217–1232 (GNVKTSTWLFETHSID), 1254–1269 (GDVKQAVWLFENQTLD), and 1289–1304 (SDVKTTTWLFETTPIH). A Phosphoserine modification is found at serine 1573. Disordered regions lie at residues 1848-1882 (VSASMSRKKSLKTKESENVRESKDDVSSTQSVDKT), 1920-1939 (AETQSYRPDPTQHPVSNPAG), 1957-2002 (EKQN…APDK), 2039-2296 (YPDC…KPYM), 2311-2378 (RQQR…SKAV), 2546-2593 (YAAK…ESRV), and 2626-2687 (NFQQ…RESQ). Positions 1859-1873 (KTKESENVRESKDDV) are enriched in basic and acidic residues. Residue threonine 1930 is modified to Phosphothreonine. Serine 1935 carries the post-translational modification Phosphoserine. Residues 1957–1969 (EKQNSNKDMRKND) are compositionally biased toward basic and acidic residues. Composition is skewed to pro residues over residues 2051–2062 (LPPPSPPPPPPS) and 2125–2134 (SLPPPPPTAP). A compositionally biased stretch (low complexity) spans 2135-2145 (SQPAHLLSSSV). A Phosphoserine modification is found at serine 2158. The segment covering 2158 to 2167 (SRKETLDSHQ) has biased composition (basic and acidic residues). The segment at 2181 to 2186 (PPTLPK) is interacts with NEBL. Phosphoserine occurs at positions 2198, 2211, and 2252. A compositionally biased stretch (basic and acidic residues) spans 2205–2243 (ELERSLSDVEIKTTLSKDQKSSLVAESREHTEAKQEVFR). Composition is skewed to polar residues over residues 2251–2263 (LSISSANSLSQTV) and 2282–2292 (SFPSGSEQQSP). Residues 2303 to 2328 (LMIAEEKYRQQREELEKQRRESSCHS) adopt a coiled-coil conformation. 2 stretches are compositionally biased toward basic and acidic residues: residues 2311 to 2325 (RQQREELEKQRRESS) and 2333 to 2350 (ETQHRSLSEKEKETELQK). Positions 2626–2635 (NFQQTQTQTS) are enriched in polar residues. Basic and acidic residues predominate over residues 2636 to 2659 (RIEHKELSQPYSEKKCLRDKDKQQ). Polar residues predominate over residues 2674 to 2685 (TQKQSSFSSVRE). Coiled coils occupy residues 2696 to 2724 (NILEFLRKREELQQILSRVKQFEADSNKS) and 2751 to 2777 (RVAMENNLEKVKEEIIHIKTQAEEMLV). The interval 2835–2934 (RQVATHSEAA…PSPPRSRSEQ (100 aa)) is disordered. 2 stretches are compositionally biased toward polar residues: residues 2836-2850 (QVATHSEAATHNPAK) and 2891-2903 (KSELSQSPKNNSC). A compositionally biased stretch (basic and acidic residues) spans 2907–2916 (LPRRPMEHTS). A phosphoserine mark is found at serine 2987 and serine 3225. The disordered stretch occupies residues 3278–3302 (QGNLHNLSKDGLSNGVPRSRPAEFS).

This sequence belongs to the Xin family. In terms of assembly, interacts with ACTN2. Interacts with F-actin. Interacts with NEBL (via SH3 domain). Interacts with Kcna5/Kv1.5 and Scn5a/Nav1.5; the interactions are required for normal action potential configuration in the heart.

The protein localises to the cell junction. In terms of biological role, protects actin filaments from depolymerization. Required for correct morphology of cell membranes and maturation of intercalated disks of cardiomyocytes via facilitating localization of XIRP1 and CDH2 to the termini of aligned mature cardiomyocytes. Thereby required for correct postnatal heart development and growth regulation that is crucial for overall heart morphology and diastolic function. Required for normal electrical conduction in the heart including formation of the infranodal ventricular conduction system and normal action potential configuration, as a result of its interaction with the cardiac ion channel components Scn5a/Nav1.5 and Kcna5/Kv1.5. Required for regular actin filament spacing of the paracrystalline array in both inner and outer hair cells of the cochlea, thereby required for maintenance of stereocilia morphology. In Rattus norvegicus (Rat), this protein is Xin actin-binding repeat-containing protein 2.